Consider the following 307-residue polypeptide: Acetaldehyde dehydrogenase 2 (307 aa).

Residue C131 is the Acyl-thioester intermediate of the active site. NAD(+) is bound by residues 162–170 (SVGPGTRKN) and N273.

This sequence belongs to the acetaldehyde dehydrogenase family.

It catalyses the reaction acetaldehyde + NAD(+) + CoA = acetyl-CoA + NADH + H(+). This chain is Acetaldehyde dehydrogenase 2 (aphF), found in Comamonas testosteroni (Pseudomonas testosteroni).